The primary structure comprises 177 residues: MSRVGKYPVEVPSGVQVSIVDGIFVAKGKLGELKLPLSQHIEAEIADNKVSVRPVGTAAPARMMWGTTRALVASMVKGVSEGFSKTLEVTGTGYRAAVQGSNLVMNLGYSHDIVYAIPAGIKITTPRPTAIVVEGVDKQRVGQVALDIRSFRKPEPYKGKGVRYDTETIRRKEGKKK.

Residues 156–171 (PYKGKGVRYDTETIRR) are compositionally biased toward basic and acidic residues. Positions 156–177 (PYKGKGVRYDTETIRRKEGKKK) are disordered.

This sequence belongs to the universal ribosomal protein uL6 family. In terms of assembly, part of the 50S ribosomal subunit.

Its function is as follows. This protein binds to the 23S rRNA, and is important in its secondary structure. It is located near the subunit interface in the base of the L7/L12 stalk, and near the tRNA binding site of the peptidyltransferase center. The chain is Large ribosomal subunit protein uL6 from Gluconacetobacter diazotrophicus (strain ATCC 49037 / DSM 5601 / CCUG 37298 / CIP 103539 / LMG 7603 / PAl5).